We begin with the raw amino-acid sequence, 158 residues long: S-ribosylhomocysteine lyase (158 aa).

Residues H54, H58, and C124 each coordinate Fe cation.

It belongs to the LuxS family. Homodimer. It depends on Fe cation as a cofactor.

It carries out the reaction S-(5-deoxy-D-ribos-5-yl)-L-homocysteine = (S)-4,5-dihydroxypentane-2,3-dione + L-homocysteine. Its function is as follows. Involved in the synthesis of autoinducer 2 (AI-2) which is secreted by bacteria and is used to communicate both the cell density and the metabolic potential of the environment. The regulation of gene expression in response to changes in cell density is called quorum sensing. Catalyzes the transformation of S-ribosylhomocysteine (RHC) to homocysteine (HC) and 4,5-dihydroxy-2,3-pentadione (DPD). The sequence is that of S-ribosylhomocysteine lyase from Limosilactobacillus reuteri (Lactobacillus reuteri).